We begin with the raw amino-acid sequence, 283 residues long: Cyclin-C (283 aa).

Residues 46-144 enclose the Cyclin N-terminal domain; that stretch reads NVIQALGEHL…ILECEFYLLE (99 aa). The disordered stretch occupies residues 252 to 283; sequence TILSKMPKPKPPPNSEGEQGPNGSQNSSYSQS. A compositionally biased stretch (polar residues) spans 272 to 283; that stretch reads PNGSQNSSYSQS. S275 carries the phosphoserine modification.

It belongs to the cyclin family. Cyclin C subfamily. In terms of assembly, component of the Mediator complex, which is composed of MED1, MED4, MED6, MED7, MED8, MED9, MED10, MED11, MED12, MED13, MED13L, MED14, MED15, MED16, MED17, MED18, MED19, MED20, MED21, MED22, MED23, MED24, MED25, MED26, MED27, MED29, MED30, MED31, CCNC, CDK8 and CDC2L6/CDK11. The MED12, MED13, CCNC and CDK8 subunits form a distinct module termed the CDK8 module. Mediator containing the CDK8 module is less active than Mediator lacking this module in supporting transcriptional activation. Individual preparations of the Mediator complex lacking one or more distinct subunits have been variously termed ARC, CRSP, DRIP, PC2, SMCC and TRAP. The cylin/CDK pair formed by CCNC/CDK8 also associates with the large subunit of RNA polymerase II. As to expression, highest levels in pancreas. High levels in heart, liver, skeletal muscle and kidney. Low levels in brain.

Its subcellular location is the nucleus. Functionally, component of the Mediator complex, a coactivator involved in regulated gene transcription of nearly all RNA polymerase II-dependent genes. Mediator functions as a bridge to convey information from gene-specific regulatory proteins to the basal RNA polymerase II transcription machinery. Mediator is recruited to promoters by direct interactions with regulatory proteins and serves as a scaffold for the assembly of a functional preinitiation complex with RNA polymerase II and the general transcription factors. Binds to and activates cyclin-dependent kinase CDK8 that phosphorylates the CTD (C-terminal domain) of the large subunit of RNA polymerase II (RNAp II), which may inhibit the formation of a transcription initiation complex. This Homo sapiens (Human) protein is Cyclin-C (CCNC).